The sequence spans 555 residues: CTP synthase (555 aa).

An amidoligase domain region spans residues 1 to 267 (MPKFVFVTGG…CKEVLEFLDL (267 aa)). S13 contacts CTP. A UTP-binding site is contributed by S13. ATP-binding positions include 14 to 19 (SIGKGI) and D71. The Mg(2+) site is built by D71 and E141. CTP is bound by residues 148–150 (DIE), 188–193 (KTKPTQ), and K224. Residues 188–193 (KTKPTQ) and K224 contribute to the UTP site. Positions 292 to 534 (KVAVVGKYVQ…IAAAQSRLPR (243 aa)) constitute a Glutamine amidotransferase type-1 domain. Residue G354 coordinates L-glutamine. Catalysis depends on C381, which acts as the Nucleophile; for glutamine hydrolysis. Residues 382-385 (LGMQ), E405, and R462 each bind L-glutamine. Active-site residues include H507 and E509. The segment at 532–555 (LPRSPQEALKQTQINSPNQSKNNP) is disordered. The span at 540–555 (LKQTQINSPNQSKNNP) shows a compositional bias: polar residues.

Belongs to the CTP synthase family. As to quaternary structure, homotetramer.

The enzyme catalyses UTP + L-glutamine + ATP + H2O = CTP + L-glutamate + ADP + phosphate + 2 H(+). It catalyses the reaction L-glutamine + H2O = L-glutamate + NH4(+). It carries out the reaction UTP + NH4(+) + ATP = CTP + ADP + phosphate + 2 H(+). Its pathway is pyrimidine metabolism; CTP biosynthesis via de novo pathway; CTP from UDP: step 2/2. Its activity is regulated as follows. Allosterically activated by GTP, when glutamine is the substrate; GTP has no effect on the reaction when ammonia is the substrate. The allosteric effector GTP functions by stabilizing the protein conformation that binds the tetrahedral intermediate(s) formed during glutamine hydrolysis. Inhibited by the product CTP, via allosteric rather than competitive inhibition. In terms of biological role, catalyzes the ATP-dependent amination of UTP to CTP with either L-glutamine or ammonia as the source of nitrogen. Regulates intracellular CTP levels through interactions with the four ribonucleotide triphosphates. In Prochlorococcus marinus (strain MIT 9211), this protein is CTP synthase.